Consider the following 446-residue polypeptide: Phosphoglucosamine mutase (446 aa).

The active-site Phosphoserine intermediate is the S102. Mg(2+) is bound by residues S102, D241, D243, and D245. The residue at position 102 (S102) is a Phosphoserine.

The protein belongs to the phosphohexose mutase family. Requires Mg(2+) as cofactor. Activated by phosphorylation.

It catalyses the reaction alpha-D-glucosamine 1-phosphate = D-glucosamine 6-phosphate. Catalyzes the conversion of glucosamine-6-phosphate to glucosamine-1-phosphate. In Idiomarina loihiensis (strain ATCC BAA-735 / DSM 15497 / L2-TR), this protein is Phosphoglucosamine mutase.